Reading from the N-terminus, the 425-residue chain is Serine--tRNA ligase (425 aa).

233–235 contacts L-serine; it reads TAE. Residue 264 to 266 participates in ATP binding; it reads RRE. Glu-287 contributes to the L-serine binding site. 351 to 354 lines the ATP pocket; the sequence is EISS. Position 387 (Ser-387) interacts with L-serine.

Belongs to the class-II aminoacyl-tRNA synthetase family. Type-1 seryl-tRNA synthetase subfamily. As to quaternary structure, homodimer. The tRNA molecule binds across the dimer.

The protein localises to the cytoplasm. The catalysed reaction is tRNA(Ser) + L-serine + ATP = L-seryl-tRNA(Ser) + AMP + diphosphate + H(+). It catalyses the reaction tRNA(Sec) + L-serine + ATP = L-seryl-tRNA(Sec) + AMP + diphosphate + H(+). The protein operates within aminoacyl-tRNA biosynthesis; selenocysteinyl-tRNA(Sec) biosynthesis; L-seryl-tRNA(Sec) from L-serine and tRNA(Sec): step 1/1. Its function is as follows. Catalyzes the attachment of serine to tRNA(Ser). Is also able to aminoacylate tRNA(Sec) with serine, to form the misacylated tRNA L-seryl-tRNA(Sec), which will be further converted into selenocysteinyl-tRNA(Sec). The protein is Serine--tRNA ligase of Thermotoga maritima (strain ATCC 43589 / DSM 3109 / JCM 10099 / NBRC 100826 / MSB8).